Consider the following 308-residue polypeptide: Porphobilinogen deaminase (308 aa).

S-(dipyrrolylmethanemethyl)cysteine is present on Cys241.

The protein belongs to the HMBS family. As to quaternary structure, monomer. Dipyrromethane is required as a cofactor.

It carries out the reaction 4 porphobilinogen + H2O = hydroxymethylbilane + 4 NH4(+). It functions in the pathway porphyrin-containing compound metabolism; protoporphyrin-IX biosynthesis; coproporphyrinogen-III from 5-aminolevulinate: step 2/4. Tetrapolymerization of the monopyrrole PBG into the hydroxymethylbilane pre-uroporphyrinogen in several discrete steps. In Staphylococcus saprophyticus subsp. saprophyticus (strain ATCC 15305 / DSM 20229 / NCIMB 8711 / NCTC 7292 / S-41), this protein is Porphobilinogen deaminase.